The following is a 554-amino-acid chain: Hydroxylamine reductase (554 aa).

[2Fe-2S] cluster-binding residues include Cys3, Cys6, Cys18, and Cys25. Residues His252, Glu276, Cys320, Cys408, Cys436, Cys461, Glu495, and Lys497 each contribute to the hybrid [4Fe-2O-2S] cluster site. The residue at position 408 (Cys408) is a Cysteine persulfide.

Belongs to the HCP family. [2Fe-2S] cluster is required as a cofactor. Requires hybrid [4Fe-2O-2S] cluster as cofactor.

It is found in the cytoplasm. It catalyses the reaction A + NH4(+) + H2O = hydroxylamine + AH2 + H(+). Its function is as follows. Catalyzes the reduction of hydroxylamine to form NH(3) and H(2)O. The polypeptide is Hydroxylamine reductase (Shewanella amazonensis (strain ATCC BAA-1098 / SB2B)).